The chain runs to 266 residues: Gasdermin bGSDM (266 aa).

Beta stranded transmembrane passes span Leu-67–Ile-83, Lys-95–Gln-113, Ser-162–Ala-179, and Ala-187–Tyr-203.

Belongs to the bacterial gasdermin family. As to quaternary structure, monomer. Forms large, homooligomeric ring-shaped pores when inserted in membranes.

It is found in the cytoplasm. The protein resides in the cell inner membrane. The full-length protein before cleavage is inactive: intramolecular interactions between the N-terminal domain and the C-terminal region mediate autoinhibition. The pyroptosis-like-inducing activity is carried by the released N-terminal domain (Gasdermin bGSDM, N-terminus). Its function is as follows. Precursor of a pore-forming protein involved in defense against bacteriophages. Expression of bGSDM and the neighboring protease gene (Gilli_2517) is not toxic in E.coli. Cleavage of this precursor by its dedicated protease releases the active moiety (gasdermin bGSDM, N-terminus) which inserts into membranes, forming pores and triggering cell death. Functionally, pore-forming protein that causes membrane permeabilization via a pyroptosis-like activity. Makes ring-like pores when released. The sequence is that of Gasdermin bGSDM from Gillisia limnaea (strain DSM 15749 / LMG 21470 / R-8282).